Consider the following 74-residue polypeptide: Protein SlyX homolog (74 aa).

The protein belongs to the SlyX family.

This chain is Protein SlyX homolog, found in Aliivibrio salmonicida (strain LFI1238) (Vibrio salmonicida (strain LFI1238)).